Reading from the N-terminus, the 197-residue chain is Holliday junction branch migration complex subunit RuvA (197 aa).

Residues 1–64 (MYEYIKGKYI…EDFIGVYGFL (64 aa)) are domain I. The tract at residues 65 to 144 (TKDELSMFKL…DILEEDDEQI (80 aa)) is domain II. Residues 145-149 (INKVT) form a flexible linker region. The tract at residues 149–197 (TDDKKVLEAVAALVTLGYSEKEANKVINSCDKNNSLEQIIKEALKYLMK) is domain III.

This sequence belongs to the RuvA family. In terms of assembly, homotetramer. Forms an RuvA(8)-RuvB(12)-Holliday junction (HJ) complex. HJ DNA is sandwiched between 2 RuvA tetramers; dsDNA enters through RuvA and exits via RuvB. An RuvB hexamer assembles on each DNA strand where it exits the tetramer. Each RuvB hexamer is contacted by two RuvA subunits (via domain III) on 2 adjacent RuvB subunits; this complex drives branch migration. In the full resolvosome a probable DNA-RuvA(4)-RuvB(12)-RuvC(2) complex forms which resolves the HJ.

It is found in the cytoplasm. The RuvA-RuvB-RuvC complex processes Holliday junction (HJ) DNA during genetic recombination and DNA repair, while the RuvA-RuvB complex plays an important role in the rescue of blocked DNA replication forks via replication fork reversal (RFR). RuvA specifically binds to HJ cruciform DNA, conferring on it an open structure. The RuvB hexamer acts as an ATP-dependent pump, pulling dsDNA into and through the RuvAB complex. HJ branch migration allows RuvC to scan DNA until it finds its consensus sequence, where it cleaves and resolves the cruciform DNA. This Clostridium botulinum (strain Kyoto / Type A2) protein is Holliday junction branch migration complex subunit RuvA.